The following is a 101-amino-acid chain: Small ribosomal subunit protein uS14 (101 aa).

The interval 1–22 (MAKVSSIKKNESRKKKSQSLHN) is disordered. Over residues 11–22 (ESRKKKSQSLHN) the composition is skewed to basic residues.

This sequence belongs to the universal ribosomal protein uS14 family. Part of the 30S ribosomal subunit. Contacts proteins S3 and S10.

In terms of biological role, binds 16S rRNA, required for the assembly of 30S particles and may also be responsible for determining the conformation of the 16S rRNA at the A site. This chain is Small ribosomal subunit protein uS14, found in Rickettsia conorii (strain ATCC VR-613 / Malish 7).